Reading from the N-terminus, the 143-residue chain is Transcriptional regulator MraZ (143 aa).

SpoVT-AbrB domains lie at 5 to 47 and 76 to 119; these read EFQH…TLTE and AVEV…DRKL.

The protein belongs to the MraZ family. In terms of assembly, forms oligomers.

Its subcellular location is the cytoplasm. The protein localises to the nucleoid. The chain is Transcriptional regulator MraZ from Macrococcus caseolyticus (strain JCSC5402) (Macrococcoides caseolyticum).